The primary structure comprises 422 residues: 3-phosphoshikimate 1-carboxyvinyltransferase (422 aa).

3 residues coordinate 3-phosphoshikimate: Lys20, Ser21, and Arg25. Lys20 serves as a coordination point for phosphoenolpyruvate. The phosphoenolpyruvate site is built by Gly90 and Arg118. Residues Ser161, Ser162, Gln163, Ser189, Asp305, and Lys332 each contribute to the 3-phosphoshikimate site. Gln163 serves as a coordination point for phosphoenolpyruvate. The active-site Proton acceptor is Asp305. 2 residues coordinate phosphoenolpyruvate: Arg336 and Arg378.

Belongs to the EPSP synthase family. As to quaternary structure, monomer.

Its subcellular location is the cytoplasm. The enzyme catalyses 3-phosphoshikimate + phosphoenolpyruvate = 5-O-(1-carboxyvinyl)-3-phosphoshikimate + phosphate. The protein operates within metabolic intermediate biosynthesis; chorismate biosynthesis. Functionally, catalyzes the transfer of the enolpyruvyl moiety of phosphoenolpyruvate (PEP) to the 5-hydroxyl of shikimate-3-phosphate (S3P) to produce enolpyruvyl shikimate-3-phosphate and inorganic phosphate. The protein is 3-phosphoshikimate 1-carboxyvinyltransferase of Nitrosopumilus maritimus (strain SCM1).